A 415-amino-acid polypeptide reads, in one-letter code: Probable disease resistance protein At5g66890 (415 aa).

Positions 8-43 (SFDALPHNLRECFLDMASFLEDQRIIASTIIDLWSA) constitute an NB-ARC domain. LRR repeat units lie at residues 229 to 251 (SLEK…EDVS), 256 to 278 (SLQE…ISQV), 280 to 303 (SLKK…GDLR), 304 to 326 (DLET…IDRL), 328 to 351 (NLRF…GKLK), and 352 to 373 (KLEK…VKNL). Residues 239–260 (HVVDALNELEDVSETLQSLQEI) adopt a coiled-coil conformation.

It belongs to the disease resistance NB-LRR family.

In terms of biological role, possible disease resistance protein. This is Probable disease resistance protein At5g66890 from Arabidopsis thaliana (Mouse-ear cress).